A 176-amino-acid chain; its full sequence is Large ribosomal subunit protein bL17m (176 aa).

A mitochondrion-targeting transit peptide spans 1–8 (MRLSLAAA).

It belongs to the bacterial ribosomal protein bL17 family. Component of the mitochondrial ribosome large subunit (39S) which comprises a 16S rRNA and about 50 distinct proteins.

Its subcellular location is the mitochondrion. In Rattus norvegicus (Rat), this protein is Large ribosomal subunit protein bL17m (Mrpl17).